A 764-amino-acid chain; its full sequence is 5-methyltetrahydropteroyltriglutamate--homocysteine methyltransferase (764 aa).

5-methyltetrahydropteroyltri-L-glutamate-binding positions include 16–19 (RELK) and lysine 117. L-homocysteine-binding positions include 442–444 (IGS) and glutamate 495. L-methionine is bound by residues 442 to 444 (IGS) and glutamate 495. 5-methyltetrahydropteroyltri-L-glutamate contacts are provided by residues 526–527 (RC) and tryptophan 572. Residue aspartate 610 participates in L-homocysteine binding. Aspartate 610 serves as a coordination point for L-methionine. Glutamate 616 provides a ligand contact to 5-methyltetrahydropteroyltri-L-glutamate. Histidine 652, cysteine 654, and glutamate 676 together coordinate Zn(2+). Residue histidine 705 is the Proton donor of the active site. Cysteine 737 provides a ligand contact to Zn(2+).

It belongs to the vitamin-B12 independent methionine synthase family. It depends on Zn(2+) as a cofactor.

The catalysed reaction is 5-methyltetrahydropteroyltri-L-glutamate + L-homocysteine = tetrahydropteroyltri-L-glutamate + L-methionine. It participates in amino-acid biosynthesis; L-methionine biosynthesis via de novo pathway; L-methionine from L-homocysteine (MetE route): step 1/1. Its function is as follows. Catalyzes the transfer of a methyl group from 5-methyltetrahydrofolate to homocysteine resulting in methionine formation. The protein is 5-methyltetrahydropteroyltriglutamate--homocysteine methyltransferase of Bordetella pertussis (strain Tohama I / ATCC BAA-589 / NCTC 13251).